Here is a 96-residue protein sequence, read N- to C-terminus: Acylphosphatase (96 aa).

The 88-residue stretch at 9–96 folds into the Acylphosphatase-like domain; it reads CAEIYVSGRV…DTFTDFFIKR (88 aa). Active-site residues include arginine 24 and asparagine 42.

It belongs to the acylphosphatase family.

The enzyme catalyses an acyl phosphate + H2O = a carboxylate + phosphate + H(+). The polypeptide is Acylphosphatase (acyP) (Methanococcoides burtonii (strain DSM 6242 / NBRC 107633 / OCM 468 / ACE-M)).